Here is a 339-residue protein sequence, read N- to C-terminus: Uricase (339 aa).

Active-site charge relay system residues include Lys33 and Thr78. Positions 78, 79, 201, 218, 266, 267, and 293 each coordinate urate. The active-site Charge relay system is the His295. Positions 337–339 match the Microbody targeting signal motif; the sequence is SHL.

This sequence belongs to the uricase family.

The protein localises to the peroxisome. The catalysed reaction is urate + O2 + H2O = 5-hydroxyisourate + H2O2. The protein operates within purine metabolism; urate degradation; (S)-allantoin from urate: step 1/3. Functionally, catalyzes the oxidation of uric acid to 5-hydroxyisourate, which is further processed to form (S)-allantoin. The protein is Uricase (Uro) of Drosophila subobscura (Fruit fly).